The following is a 117-amino-acid chain: Large ribosomal subunit protein bL20c (117 aa).

This sequence belongs to the bacterial ribosomal protein bL20 family.

It localises to the plastid. It is found in the chloroplast. In terms of biological role, binds directly to 23S ribosomal RNA and is necessary for the in vitro assembly process of the 50S ribosomal subunit. It is not involved in the protein synthesizing functions of that subunit. The protein is Large ribosomal subunit protein bL20c of Acorus calamus (Sweet flag).